A 205-amino-acid chain; its full sequence is Type-4 uracil-DNA glycosylase (205 aa).

[4Fe-4S] cluster-binding residues include C13 and C16. Uracil-binding positions include 40-42 (GEG), F54, and N80. Residues C84 and C100 each contribute to the [4Fe-4S] cluster site. A uracil-binding site is contributed by H155.

Belongs to the uracil-DNA glycosylase (UDG) superfamily. Type 4 (UDGa) family. As to quaternary structure, monomer.

It carries out the reaction Hydrolyzes single-stranded DNA or mismatched double-stranded DNA and polynucleotides, releasing free uracil.. Product-inhibited by apurinic/apyrimidinic sites. Removes uracil bases that are present in DNA as a result of either deamination of cytosine or misincorporation of dUMP instead of dTMP. Can remove uracil from double-stranded DNA containing either a U/G, U/A, U/C or U/T base pair as well as from single-stranded DNA. Specifically recognizes uracil that is flipped out from double-stranded DNA. The polypeptide is Type-4 uracil-DNA glycosylase (Thermus thermophilus (strain ATCC 27634 / DSM 579 / HB8)).